The following is a 437-amino-acid chain: Minor fimbrial subunit HifE (437 aa).

Residues 1–30 (MNKKSYINHYLTLFKVTTLLFTLSSNPVWA) form the signal peptide.

It belongs to the fimbrial protein family.

Its subcellular location is the fimbrium. Functionally, may be a minor structural protein required for pilus biogenesis. May be the adhesive component in the pili. The sequence is that of Minor fimbrial subunit HifE (hifE) from Haemophilus influenzae.